The chain runs to 225 residues: MKLVMLLRPPPQTHRADTTDGLPGLQEEPRGGDGPTCSGPAPAIPDSPSRCLSRGFAGRDPGCHRNRHRVHPYILSGGQRILVTSSSSSTVQGPLSSGSSQHSQSRGRPPSPDSTETERARTPVNSDRQRAGEFDLLKGGCRPCCLIEGNGNKVKCLRFRLKKSHRSRFLDITTTFWATGDEGSDRQGNGTILITFTDTTQRDLFLGSVSIPGELSVRRITISTD.

Disordered stretches follow at residues 1-67 (MKLV…HRNR) and 85-128 (SSSS…NSDR). Low complexity predominate over residues 92–108 (QGPLSSGSSQHSQSRGR). A compositionally biased stretch (basic and acidic residues) spans 116–128 (ETERARTPVNSDR).

It belongs to the papillomaviridae E8^E2C protein family.

The protein resides in the host nucleus. Its function is as follows. Plays a role in limiting the replication of viral DNA in keratinocytes. Recruits the host NCoR/SMRT complex to viral replication foci to mediate repression of both viral replication and transcription. In Bos taurus (Bovine), this protein is Protein E8^E2C.